A 370-amino-acid chain; its full sequence is CST complex subunit STN1 (370 aa).

An interaction with CTC1 region spans residues 1 to 187; that stretch reads MESNSSQCED…KVYDQPFHSP (187 aa). Residues 57–157 constitute a DNA-binding region (OB); that stretch reads VDILGTVIGV…EIHATTYYKV (101 aa). Winged helix-turn-helix (wHTH) stretches follow at residues 193 to 297 and 298 to 370; these read EALS…YVTR and EDKE…YTAF.

The protein belongs to the STN1 family. As to quaternary structure, component of the CST complex, composed of TEN1/C17orf106, CTC1/C17orf68 and STN1; in the complex interacts directly with TEN1 and CTC1. Interacts with ACD/TPP1, POT1 and POLA1.

It is found in the nucleus. The protein localises to the chromosome. It localises to the telomere. In terms of biological role, component of the CST complex proposed to act as a specialized replication factor promoting DNA replication under conditions of replication stress or natural replication barriers such as the telomere duplex. The CST complex binds single-stranded DNA with high affinity in a sequence-independent manner, while isolated subunits bind DNA with low affinity by themselves. Initially the CST complex has been proposed to protect telomeres from DNA degradation. However, the CST complex has been shown to be involved in several aspects of telomere replication. The CST complex inhibits telomerase and is involved in telomere length homeostasis; it is proposed to bind to newly telomerase-synthesized 3' overhangs and to terminate telomerase action implicating the association with the ACD:POT1 complex thus interfering with its telomerase stimulation activity. The CST complex is also proposed to be involved in fill-in synthesis of the telomeric C-strand probably implicating recruitment and activation of DNA polymerase alpha. The CST complex facilitates recovery from many forms of exogenous DNA damage; seems to be involved in the re-initiation of DNA replication at repaired forks and/or dormant origins. Required for efficicient replication of the duplex region of the telomere. Promotes efficient replication of lagging-strand telomeres. Promotes general replication start following replication-fork stalling implicating new origin firing. May be in involved in C-strand fill-in during late S/G2 phase independent of its role in telomere duplex replication. This Bos taurus (Bovine) protein is CST complex subunit STN1.